We begin with the raw amino-acid sequence, 449 residues long: Early 53 kDa protein (449 aa).

Residues 1–68 (MNRFFRENNI…CTSPAKPLEH (68 aa)) are disordered. The segment covering 31-42 (NSPPSPVRPPPK) has biased composition (pro residues). The C4-type zinc finger occupies 379–399 (CKLCKKTKLYYKNPVLYCTKC).

Its subcellular location is the virion. It localises to the host cytoplasm. The protein resides in the host nucleus. The protein localises to the host cell membrane. May act as a packaging protein or as a structural component associated with intranuclear baculovirus virion assembly. This chain is Early 53 kDa protein (ME53), found in Autographa californica nuclear polyhedrosis virus (AcMNPV).